Reading from the N-terminus, the 3147-residue chain is Bassianolide nonribosomal cyclodepsipeptide synthetase (3147 aa).

Residues 1–12 are compositionally biased toward polar residues; it reads MEPPNNANTGQL. The segment at 1-23 is disordered; sequence MEPPNNANTGQLGPTLPNGTVDL. The segment at 69–454 is condensation 1; sequence HVVYEIPEDV…INKLQSTDGS (386 aa). The segment at 495 to 887 is adenylation 1; the sequence is DDTPNKPAVC…GRMDSQVKIR (393 aa). Positions 1015–1091 constitute a Carrier 1 domain; sequence PDASAGVTKL…SLQAAIGGSS (77 aa). O-(pantetheine 4'-phosphoryl)serine is present on Ser1052. Positions 1109 to 1538 are condensation 2; that stretch reads SYSQGRLWFL…QTLISVVPLT (430 aa). An adenylation 2 region spans residues 1567 to 1973; it reads FATQVASYPD…GRMDFQFKIR (407 aa). An S-adenosyl-L-methionine-dependent N-methyltransferase (MT) region spans residues 2041 to 2181; it reads TYTELDTVSS…FPTRDYLEQV (141 aa). Carrier domains lie at 2515 to 2589 and 2615 to 2689; these read FPLS…RQQL and APTT…EVSQ. Ser2549 and Ser2649 each carry O-(pantetheine 4'-phosphoryl)serine. The condensation 3 stretch occupies residues 2735–3139; that stretch reads QDVYLATHLQ…THLMEQVCNT (405 aa).

Belongs to the NRP synthetase family.

In terms of biological role, bassianolide nonribosomal synthetase that mediates the biosynthesis of bassianolide (BSL), a non-ribosomal cyclodepsipeptide that shows insecticidal and cancer cell antiproliferative activity. BSLS first catalyzes the iterative synthesis of an enzyme-bound dipeptidol monomer intermediate from D-2-hydroxyisovalerate and L-leucine before performing the condensation and cyclization of 4 dipeptidol monomers to yield the cyclic tetrameric ester bassianolide. The N-methyltransferase MT domain is responsible for the methylation of the leucine residues of bassianolide. BSLS is flexible with both the amino acid and hydroxyl acid precursors, and produces bassianolide as the major product (containing N-methyl-L-Leu), together with small amounts of beauvericin and its analogs beauvericins A-C (containing N-methyl-L-Phe). This chain is Bassianolide nonribosomal cyclodepsipeptide synthetase, found in Beauveria bassiana (strain ARSEF 2860) (White muscardine disease fungus).